We begin with the raw amino-acid sequence, 21 residues long: C-phycocyanin alpha subunit (21 aa).

It belongs to the phycobiliprotein family. In terms of assembly, heterodimer of an alpha and a beta subunit, which further assembles into trimers and the trimers into hexamers. Contains one covalently linked bilin chromophore.

The protein localises to the cellular thylakoid membrane. Light-harvesting photosynthetic bile pigment-protein from the phycobiliprotein complex (phycobilisome, PBS). Phycocyanin is the major phycobiliprotein in the PBS rod. In Anabaena sp. (strain L31), this protein is C-phycocyanin alpha subunit.